The following is a 295-amino-acid chain: HTH-type transcriptional regulator TdfR (295 aa).

The 58-residue stretch at 1-58 (MEFRQLRYFVAAAEEGNVGAAARRLHISQPPVTRQIHALEQHLGVLLFERSARGVQLT) folds into the HTH lysR-type domain. Residues 18–37 (VGAAARRLHISQPPVTRQIH) constitute a DNA-binding region (H-T-H motif).

Belongs to the LysR transcriptional regulatory family.

The protein localises to the cytoplasm. Involved in the regulation of 3-chlorocatechol degradation. Transcriptional regulator of tfdB expression. Acts as a repressor in the absence of its effector (either 2-cis-chlorodiene lactone or chloromaleylacetate) but acts as an activator when its effector is present. The protein is HTH-type transcriptional regulator TdfR (tfdR) of Cupriavidus pinatubonensis (strain JMP 134 / LMG 1197) (Cupriavidus necator (strain JMP 134)).